The following is a 302-amino-acid chain: Dihydroorotate dehydrogenase B (NAD(+)), catalytic subunit (302 aa).

Residues serine 23 and 47–48 contribute to the FMN site; that span reads KG. Substrate contacts are provided by residues lysine 47 and 71 to 75; that span reads NSVGL. Asparagine 101 and asparagine 128 together coordinate FMN. Asparagine 128 contacts substrate. Catalysis depends on cysteine 131, which acts as the Nucleophile. Residues lysine 166 and isoleucine 192 each contribute to the FMN site. 193–194 contacts substrate; that stretch reads NT. Residues glycine 218, 244–245, and 266–267 each bind FMN; these read GG and GT.

Belongs to the dihydroorotate dehydrogenase family. Type 1 subfamily. Heterotetramer of 2 PyrK and 2 PyrD type B subunits. Requires FMN as cofactor.

It is found in the cytoplasm. It catalyses the reaction (S)-dihydroorotate + NAD(+) = orotate + NADH + H(+). Its pathway is pyrimidine metabolism; UMP biosynthesis via de novo pathway; orotate from (S)-dihydroorotate (NAD(+) route): step 1/1. Catalyzes the conversion of dihydroorotate to orotate with NAD(+) as electron acceptor. This chain is Dihydroorotate dehydrogenase B (NAD(+)), catalytic subunit (pyrD), found in Alkaliphilus metalliredigens (strain QYMF).